A 388-amino-acid polypeptide reads, in one-letter code: Phosphopentomutase (388 aa).

Mn(2+)-binding residues include Asp11, Asp283, His288, Asp324, His325, and His336.

Belongs to the phosphopentomutase family. It depends on Mn(2+) as a cofactor.

Its subcellular location is the cytoplasm. The enzyme catalyses 2-deoxy-alpha-D-ribose 1-phosphate = 2-deoxy-D-ribose 5-phosphate. It carries out the reaction alpha-D-ribose 1-phosphate = D-ribose 5-phosphate. It participates in carbohydrate degradation; 2-deoxy-D-ribose 1-phosphate degradation; D-glyceraldehyde 3-phosphate and acetaldehyde from 2-deoxy-alpha-D-ribose 1-phosphate: step 1/2. Functionally, isomerase that catalyzes the conversion of deoxy-ribose 1-phosphate (dRib-1-P) and ribose 1-phosphate (Rib-1-P) to deoxy-ribose 5-phosphate (dRib-5-P) and ribose 5-phosphate (Rib-5-P), respectively. The sequence is that of Phosphopentomutase from Anaeromyxobacter sp. (strain K).